Here is a 519-residue protein sequence, read N- to C-terminus: Transmembrane protein 180 (519 aa).

The Extracellular portion of the chain corresponds to 1–11; that stretch reads MGLDWPQAWLL. Residues 12 to 43 form a helical membrane-spanning segment; it reads GLPIAVVYGSLALFTSILHNVFLLYYVDTFVS. Over 44-55 the chain is Cytoplasmic; that stretch reads VYKINKVSFWVG. Residues 56 to 74 form a helical membrane-spanning segment; that stretch reads ETVFLLWNSFNDPLFGWLS. At 75-100 the chain is on the extracellular side; the sequence is DRQLLSSQPRSGAGLSSRDVVLTRVR. A helical membrane pass occupies residues 101 to 118; sequence ALGWHGPLLALSFLAFWV. Over 119-126 the chain is Cytoplasmic; it reads PWAPAGLQ. The helical transmembrane segment at 127–151 threads the bilayer; the sequence is FLLCLCLYDGFLTLVDLHHHALLAD. At 152 to 155 the chain is on the extracellular side; sequence LALS. The helical transmembrane segment at 156-179 threads the bilayer; sequence SHDRTHLNFYCSLFSAAGSLSVFA. The Cytoplasmic portion of the chain corresponds to 180–191; that stretch reads SYAFWNKEDFSS. A helical transmembrane segment spans residues 192 to 223; the sequence is FRAFCVVLAAGSGLGFLGTTQLLKRQIEATRR. At 224 to 264 the chain is on the extracellular side; the sequence is DRGCPGLDLDGGVCEEEPPVGGEEAGNITLGQYLRQLARHQ. Asn250 is a glycosylation site (N-linked (GlcNAc...) asparagine). Residues 265 to 292 traverse the membrane as a helical segment; the sequence is NFLWFVGMDLVQVFHCHFNSNFFPLFLE. Residues 293 to 305 lie on the Cytoplasmic side of the membrane; that stretch reads HLLSDHISLSTGS. A helical membrane pass occupies residues 306 to 325; the sequence is FLLGISYVAPHLNNLYFLPL. The Extracellular segment spans residues 326 to 330; it reads CRRWG. A helical membrane pass occupies residues 331 to 350; that stretch reads VYAVVRGLFLLKLSLSLLML. Residues 351–358 lie on the Cytoplasmic side of the membrane; sequence LAGPDHPG. The helical transmembrane segment at 359 to 393 threads the bilayer; that stretch reads LLCFFIASNRVFTEGTCKLLTLVVTDLVDEDLVLN. Residues 394–402 are Extracellular-facing; it reads HRKQAASAL. The chain crosses the membrane as a helical span at residues 403–429; it reads LFGMVALVTKPGQTFAPLLGTWLLCFY. At 430–468 the chain is on the cytoplasmic side; that stretch reads TGHDLFQQSPMTPVGSVRPWPELPAPAPAPAQAPTLRQG. Residues 469-487 traverse the membrane as a helical segment; sequence CFYLLVFVPITCALLQLFT. Topologically, residues 488-519 are extracellular; sequence WSQFTLHGRRLRTVKAQRQNLAQIHTLNIKMV.

Its subcellular location is the cell membrane. In Mus musculus (Mouse), this protein is Transmembrane protein 180.